Consider the following 317-residue polypeptide: Methionyl-tRNA formyltransferase (317 aa).

S112–P115 contributes to the (6S)-5,6,7,8-tetrahydrofolate binding site.

Belongs to the Fmt family.

The catalysed reaction is L-methionyl-tRNA(fMet) + (6R)-10-formyltetrahydrofolate = N-formyl-L-methionyl-tRNA(fMet) + (6S)-5,6,7,8-tetrahydrofolate + H(+). Attaches a formyl group to the free amino group of methionyl-tRNA(fMet). The formyl group appears to play a dual role in the initiator identity of N-formylmethionyl-tRNA by promoting its recognition by IF2 and preventing the misappropriation of this tRNA by the elongation apparatus. This chain is Methionyl-tRNA formyltransferase, found in Mesorhizobium japonicum (strain LMG 29417 / CECT 9101 / MAFF 303099) (Mesorhizobium loti (strain MAFF 303099)).